The following is a 172-amino-acid chain: Putative RNA polymerase II transcriptional coactivator (172 aa).

2 disordered regions span residues 1 to 43 (MPPK…QDGN) and 123 to 172 (QTDA…DDDE). The segment covering 24–43 (GNTGKAQPQELTKGSDQDGN) has biased composition (polar residues). Basic and acidic residues predominate over residues 131–144 (PKVKALESNKESIK). Acidic residues predominate over residues 158-172 (TSDEEEAAEDEDDDE).

This sequence belongs to the transcriptional coactivator PC4 family.

The protein localises to the nucleus. Functionally, general coactivator that functions cooperatively with TAFs and mediates functional interactions between upstream activators and the general transcriptional machinery. Binds single-stranded DNA. This chain is Putative RNA polymerase II transcriptional coactivator, found in Neurospora crassa (strain ATCC 24698 / 74-OR23-1A / CBS 708.71 / DSM 1257 / FGSC 987).